Consider the following 273-residue polypeptide: HMP-PP phosphatase (273 aa).

Asp-8 functions as the Nucleophile in the catalytic mechanism. Mg(2+)-binding residues include Asp-8, Asp-10, and Asp-212.

The protein belongs to the HAD-like hydrolase superfamily. Cof family. The cofactor is Mg(2+).

The catalysed reaction is 4-amino-2-methyl-5-(diphosphooxymethyl)pyrimidine + H2O = 4-amino-2-methyl-5-(phosphooxymethyl)pyrimidine + phosphate + H(+). Functionally, catalyzes the hydrolysis of 4-amino-2-methyl-5-hydroxymethylpyrimidine pyrophosphate (HMP-PP) to 4-amino-2-methyl-5-hydroxymethylpyrimidine phosphate (HMP-P). This chain is HMP-PP phosphatase, found in Yersinia pseudotuberculosis serotype I (strain IP32953).